Consider the following 322-residue polypeptide: Phosphoserine phosphatase (322 aa).

Substrate is bound at residue 10–12; that stretch reads PED. Asp12, Asp116, and Asp118 together coordinate Mg(2+). The active-site Nucleophile is the Asp116. Asp118 (proton donor) is an active-site residue. Substrate is bound by residues Glu125, Arg161, 204–205, and Lys249; that span reads SG. Asp272 is a Mg(2+) binding site. Substrate is bound at residue Asn275.

The protein belongs to the HAD-like hydrolase superfamily. SerB family. The cofactor is Mg(2+).

The enzyme catalyses O-phospho-L-serine + H2O = L-serine + phosphate. The catalysed reaction is O-phospho-D-serine + H2O = D-serine + phosphate. Its pathway is amino-acid biosynthesis; L-serine biosynthesis; L-serine from 3-phospho-D-glycerate: step 3/3. Functionally, catalyzes the dephosphorylation of phosphoserine (P-Ser). The chain is Phosphoserine phosphatase (serB) from Escherichia coli O157:H7.